Reading from the N-terminus, the 366-residue chain is Structure-specific endonuclease subunit SLX1 (366 aa).

Positions 14–95 (AFYCCYLLRS…QNTHATRHID (82 aa)) constitute a GIY-YIG domain. Disordered stretches follow at residues 31–59 (IGST…SMQG) and 102–124 (RAEE…KRPP). Residues 109–123 (GKKKATSPGRRRKRP) show a composition bias toward basic residues. An SLX1-type zinc finger spans residues 234–289 (CGVCKNPADMSSSLILVCPIEACQTVSHLSCLSNKFLTEGGELETLVPLEGTCPGC). The segment at 317–366 (KPKRKRKSDNPAESDAADGQALEQEDEELDETWMEDMSQDEEPSPVKKSR) is disordered. Over residues 339 to 359 (EQEDEELDETWMEDMSQDEEP) the composition is skewed to acidic residues.

It belongs to the SLX1 family. Forms a heterodimer with SLX4. The cofactor is a divalent metal cation.

The protein resides in the nucleus. Catalytic subunit of the SLX1-SLX4 structure-specific endonuclease that resolves DNA secondary structures generated during DNA repair and recombination. Has endonuclease activity towards branched DNA substrates, introducing single-strand cuts in duplex DNA close to junctions with ss-DNA. This is Structure-specific endonuclease subunit SLX1 from Phaeosphaeria nodorum (strain SN15 / ATCC MYA-4574 / FGSC 10173) (Glume blotch fungus).